A 372-amino-acid polypeptide reads, in one-letter code: F-box protein AFR (372 aa).

The segment covering 1–15 has biased composition (polar residues); that stretch reads MAEQETTSNINTIND. The interval 1 to 27 is disordered; the sequence is MAEQETTSNINTINDQAEEETRTKSQP. Positions 29 to 74 constitute an F-box domain; sequence ISGLPNDIAELCLLRLPYPYHALYRSVSSSWNKTITNPRFLFSKQS. Kelch repeat units lie at residues 80–126, 135–178, 179–227, 229–276, and 279–325; these read PYLF…HALS, KLFV…NVNG, KIMA…VIGK, MCVT…IRDR, and VISE…DRVF.

In terms of assembly, part of a SCF (ASK-cullin-F-box) protein ligase complex. Interacts with SKP1A.

Its pathway is protein modification; protein ubiquitination. Functionally, component of SCF (ASK-cullin-F-box) E3 ubiquitin ligase complexes, which may mediate the ubiquitination and subsequent proteasomal degradation of target proteins. Part of the phyA-mediated signaling transduction pathway leading to the regulation of gene expression and hypocotyls elongation in response to red and far-red light exposure. The polypeptide is F-box protein AFR (AFR) (Arabidopsis thaliana (Mouse-ear cress)).